A 208-amino-acid polypeptide reads, in one-letter code: Holliday junction branch migration complex subunit RuvA (208 aa).

Positions M1–R64 are domain I. Residues V65–I143 are domain II. A flexible linker region spans residues A144–R152. Residues T153 to R208 are domain III.

It belongs to the RuvA family. In terms of assembly, homotetramer. Forms an RuvA(8)-RuvB(12)-Holliday junction (HJ) complex. HJ DNA is sandwiched between 2 RuvA tetramers; dsDNA enters through RuvA and exits via RuvB. An RuvB hexamer assembles on each DNA strand where it exits the tetramer. Each RuvB hexamer is contacted by two RuvA subunits (via domain III) on 2 adjacent RuvB subunits; this complex drives branch migration. In the full resolvosome a probable DNA-RuvA(4)-RuvB(12)-RuvC(2) complex forms which resolves the HJ.

Its subcellular location is the cytoplasm. The RuvA-RuvB-RuvC complex processes Holliday junction (HJ) DNA during genetic recombination and DNA repair, while the RuvA-RuvB complex plays an important role in the rescue of blocked DNA replication forks via replication fork reversal (RFR). RuvA specifically binds to HJ cruciform DNA, conferring on it an open structure. The RuvB hexamer acts as an ATP-dependent pump, pulling dsDNA into and through the RuvAB complex. HJ branch migration allows RuvC to scan DNA until it finds its consensus sequence, where it cleaves and resolves the cruciform DNA. In Methylorubrum extorquens (strain CM4 / NCIMB 13688) (Methylobacterium extorquens), this protein is Holliday junction branch migration complex subunit RuvA.